Consider the following 150-residue polypeptide: Protein SLM6 (150 aa).

Topologically, residues 1-76 are extracellular; sequence MCSRFSSTSL…SLLRSGVFPS (76 aa). A helical transmembrane segment spans residues 77–97; sequence WLFCMFSSILALAISNSFFFF. Residues 98–104 lie on the Cytoplasmic side of the membrane; sequence SSNACFS. A helical transmembrane segment spans residues 105–125; it reads LLFNSFLVTGFSFSADLLVLA. Residues 126–150 lie on the Extracellular side of the membrane; sequence AAADTLESNVSNDIGGNCATRLFKL.

The protein localises to the membrane. This Saccharomyces cerevisiae (strain ATCC 204508 / S288c) (Baker's yeast) protein is Protein SLM6.